Consider the following 438-residue polypeptide: Transposon Ty2-LR1 Gag polyprotein (438 aa).

Polar residues-rich tracts occupy residues 1-11, 19-39, and 49-60; these read MESQQLHQNPH, ASVT…SASN, and KVNSQQETTPGT. 3 disordered regions span residues 1–86, 364–397, and 419–438; these read MESQ…GQYQ, KNVS…AKAH, and SSQY…TERI. Residues 295-397 form an RNA-binding region; that stretch reads ENNINVSDRL…SSKPRAAKAH (103 aa). Over residues 369–381 the composition is skewed to low complexity; the sequence is TSPNTTNTKVTTR.

Homotrimer.

It localises to the cytoplasm. Functionally, capsid protein (CA) is the structural component of the virus-like particle (VLP), forming the shell that encapsulates the retrotransposons dimeric RNA genome. The particles are assembled from trimer-clustered units and there are holes in the capsid shells that allow for the diffusion of macromolecules. CA also has nucleocapsid-like chaperone activity, promoting primer tRNA(i)-Met annealing to the multipartite primer-binding site (PBS), dimerization of Ty2 RNA and initiation of reverse transcription. This chain is Transposon Ty2-LR1 Gag polyprotein (TY2A-LR1), found in Saccharomyces cerevisiae (strain ATCC 204508 / S288c) (Baker's yeast).